Consider the following 256-residue polypeptide: 5-keto-4-deoxy-D-glucarate aldolase (256 aa).

The Proton acceptor role is filled by H50. Substrate is bound at residue Q151. E153 is a binding site for Mg(2+). Residues S178 and D179 each contribute to the substrate site. D179 provides a ligand contact to Mg(2+).

It belongs to the HpcH/HpaI aldolase family. KDGluc aldolase subfamily. As to quaternary structure, homohexamer; trimer of dimers. It depends on Mg(2+) as a cofactor.

It carries out the reaction 5-dehydro-4-deoxy-D-glucarate = 2-hydroxy-3-oxopropanoate + pyruvate. It catalyses the reaction 2-dehydro-3-deoxy-D-glucarate = 2-hydroxy-3-oxopropanoate + pyruvate. It participates in carbohydrate acid metabolism; galactarate degradation; D-glycerate from galactarate: step 2/3. Catalyzes the reversible retro-aldol cleavage of both 5-keto-4-deoxy-D-glucarate and 2-keto-3-deoxy-D-glucarate to pyruvate and tartronic semialdehyde. This chain is 5-keto-4-deoxy-D-glucarate aldolase, found in Klebsiella pneumoniae subsp. pneumoniae (strain ATCC 700721 / MGH 78578).